The following is an 858-amino-acid chain: Taste receptor type 1 member 3 (858 aa).

A signal peptide spans 1-20 (MPALAIMGLSLAAFLELGMG). Residues 21–572 (ASLCLSQQFK…RPKFLAWGEP (552 aa)) lie on the Extracellular side of the membrane. Asn58 carries N-linked (GlcNAc...) asparagine; when associated with variant T-60 glycosylation. N-linked (GlcNAc...) asparagine glycosylation is found at Asn85, Asn130, Asn203, Asn264, Asn379, Asn387, Asn418, Asn439, and Asn482. Residues 573–593 (VVLSLLLLLCLVLGLALAALG) traverse the membrane as a helical segment. Over 594 to 610 (LSVHHWDSPLVQASGGS) the chain is Cytoplasmic. Residues 611-631 (QFCFGLICLGLFCLSVLLFPG) form a helical membrane-spanning segment. The Extracellular portion of the chain corresponds to 632 to 644 (RPSSASCLAQQPM). Residues 645–665 (AHLPLTGCLSTLFLQAAETFV) form a helical membrane-spanning segment. Over 666–687 (ESELPLSWANWLCSYLRGLWAW) the chain is Cytoplasmic. Residues 688–708 (LVVLLATFVEAALCAWYLIAF) traverse the membrane as a helical segment. Topologically, residues 709-735 (PPEVVTDWSVLPTEVLEHCHVRSWVSL) are extracellular. Residues 736 to 756 (GLVHITNAMLAFLCFLGTFLV) traverse the membrane as a helical segment. The Cytoplasmic segment spans residues 757–767 (QSQPGRYNRAR). A helical membrane pass occupies residues 768–788 (GLTFAMLAYFITWVSFVPLLA). Residues 789–796 (NVQVAYQP) lie on the Extracellular side of the membrane. A helical membrane pass occupies residues 797 to 817 (AVQMGAILVCALGILVTFHLP). Topologically, residues 818 to 858 (KCYVLLWLPKLNTQEFFLGRNAKKAADENSGGGEAAQGHNE) are cytoplasmic.

This sequence belongs to the G-protein coupled receptor 3 family. TAS1R subfamily. As to quaternary structure, forms homodimers or heterodimers with TAS1R1 and TAS1R2. The Thr-60 variant is predicted to introduce a novel N-linked glycosylation site at Asn-58. The addition of even a short carbohydrate group at Asn-58 is predicted to disrupt one of the contact surfaces required for stability of a dimer. Therefore a Thr-60 variant N-glycosylated at Asn-58 is predicted to be precluded from forming homodimers or heterodimers. As to expression, expressed in circumvallate, foliate and fungiform taste papillae as well as in taste buds on the palate. Also expressed in testis. Not expressed in brain, heart, kidney, liver or spleen. The topographic distribution in various taste papillae is different from those of other T1R members.

The protein resides in the cell membrane. Putative taste receptor. TAS1R1/TAS1R3 responds to the umami taste stimulus (the taste of monosodium glutamate) and also to most of the 20 standard L-amino acids, but not to their D-enantiomers or other compounds. TAS1R2/TAS1R3 recognizes diverse natural and synthetic sweeteners. TAS1R3 is essential for the recognition and response to the disaccharide trehalose. Sequence differences within and between species can significantly influence the selectivity and specificity of taste responses. In Mus musculus (Mouse), this protein is Taste receptor type 1 member 3 (Tas1r3).